The following is a 322-amino-acid chain: Beta-carotene 3-hydroxylase, chloroplastic (322 aa).

Residues 1–68 constitute a chloroplast transit peptide; it reads TFHKPVSGAS…AQRCSLVRLR (68 aa). Transmembrane regions (helical) follow at residues 118–138 and 149–169; these read QAAAIAASIGVSGIAIFATYL and AVPWGEVAGTLLLVVGGALGM. The Fatty acid hydroxylase domain occupies 164–286; it reads GGALGMEMYA…AHQLHHSGKY (123 aa). The Histidine box-1 motif lies at 177–182; it reads HKAIWH. The short motif at 191-195 is the Histidine box-2 element; that stretch reads HKSHH. The next 2 membrane-spanning stretches (helical) occupy residues 207-227 and 231-251; these read LFAIINGLPAMLLCTFGFWLP and GAACFGAGLGITLYGMAYMFV. A Histidine box-3 motif is present at residues 252–257; sequence HDGLVH. Residues 278–282 carry the Histidine box-4 motif; it reads HQLHH.

The protein belongs to the sterol desaturase family.

The protein localises to the plastid. It localises to the chloroplast membrane. It catalyses the reaction all-trans-beta-carotene + 4 reduced [2Fe-2S]-[ferredoxin] + 2 O2 + 4 H(+) = all-trans-zeaxanthin + 4 oxidized [2Fe-2S]-[ferredoxin] + 2 H2O. Nonheme diiron monooxygenase involved in the biosynthesis of astaxanthin. Hydroxylates beta-ring of beta-carotene and catalyzes the conversion of canthaxanthin to astaxanthin. Uses ferredoxin as an electron donor. In Haematococcus lacustris (Green alga), this protein is Beta-carotene 3-hydroxylase, chloroplastic (CRTZ).